Reading from the N-terminus, the 395-residue chain is Protein RIF2 (395 aa).

As to quaternary structure, interacts with RIF1 and RAP1 C-terminus.

It localises to the nucleus. The protein localises to the chromosome. It is found in the telomere. Its function is as follows. Involved in transcriptional silencing and telomere length regulation. Its role in telomere length regulation results from either a block in elongation or promoting degradation of the telomere ends. Loss of RIF1 function results in derepression of an HMR silencer, whose ARS consensus element has been deleted, and in the elongation of telomeres. RAP1 may target the binding of RIF1 to silencers and telomeres. The polypeptide is Protein RIF2 (RIF2) (Saccharomyces cerevisiae (strain ATCC 204508 / S288c) (Baker's yeast)).